Here is a 280-residue protein sequence, read N- to C-terminus: Urease accessory protein UreD 3 (280 aa).

It belongs to the UreD family. As to quaternary structure, ureD, UreF and UreG form a complex that acts as a GTP-hydrolysis-dependent molecular chaperone, activating the urease apoprotein by helping to assemble the nickel containing metallocenter of UreC. The UreE protein probably delivers the nickel.

It is found in the cytoplasm. In terms of biological role, required for maturation of urease via the functional incorporation of the urease nickel metallocenter. The sequence is that of Urease accessory protein UreD 3 from Bradyrhizobium sp. (strain ORS 278).